We begin with the raw amino-acid sequence, 218 residues long: Small ribosomal subunit protein uS3 (218 aa).

Positions 38–106 constitute a KH type-2 domain; sequence IRDYVAKRLS…RVHINIVEIK (69 aa).

This sequence belongs to the universal ribosomal protein uS3 family. Part of the 30S ribosomal subunit. Forms a tight complex with proteins S10 and S14.

Functionally, binds the lower part of the 30S subunit head. Binds mRNA in the 70S ribosome, positioning it for translation. The protein is Small ribosomal subunit protein uS3 of Listeria monocytogenes serotype 4b (strain F2365).